A 409-amino-acid chain; its full sequence is Argininosuccinate synthase (409 aa).

ATP-binding positions include 11–19 (AYSGGLDTS) and alanine 38. Positions 91 and 96 each coordinate L-citrulline. Position 121 (glycine 121) interacts with ATP. The L-aspartate site is built by threonine 123, asparagine 127, and aspartate 128. Asparagine 127 lines the L-citrulline pocket. L-citrulline is bound by residues arginine 131, serine 182, serine 191, glutamate 267, and tyrosine 279.

This sequence belongs to the argininosuccinate synthase family. Type 1 subfamily. As to quaternary structure, homotetramer.

It localises to the cytoplasm. It carries out the reaction L-citrulline + L-aspartate + ATP = 2-(N(omega)-L-arginino)succinate + AMP + diphosphate + H(+). The protein operates within amino-acid biosynthesis; L-arginine biosynthesis; L-arginine from L-ornithine and carbamoyl phosphate: step 2/3. The sequence is that of Argininosuccinate synthase from Xanthobacter autotrophicus (strain ATCC BAA-1158 / Py2).